A 154-amino-acid chain; its full sequence is Anaerobic ribonucleoside-triphosphate reductase-activating protein (154 aa).

Residues Cys26, Cys30, and Cys33 each coordinate [4Fe-4S] cluster. S-adenosyl-L-methionine is bound by residues 32 to 34 and Gly74; that span reads GCY.

It belongs to the organic radical-activating enzymes family. As to quaternary structure, forms a tetramer composed of two NrdD and two NrdG subunits. Requires [4Fe-4S] cluster as cofactor.

The protein localises to the cytoplasm. It carries out the reaction glycyl-[protein] + reduced [flavodoxin] + S-adenosyl-L-methionine = glycin-2-yl radical-[protein] + semiquinone [flavodoxin] + 5'-deoxyadenosine + L-methionine + H(+). Activation of anaerobic ribonucleoside-triphosphate reductase under anaerobic conditions by generation of an organic free radical, using S-adenosylmethionine and reduced flavodoxin as cosubstrates to produce 5'-deoxy-adenosine. The sequence is that of Anaerobic ribonucleoside-triphosphate reductase-activating protein (nrdG) from Salmonella typhimurium (strain LT2 / SGSC1412 / ATCC 700720).